The chain runs to 960 residues: Mast/stem cell growth factor receptor Kit (960 aa).

An N-terminal signal peptide occupies residues 1–24 (MEGAHLAWELAHAVLLLSLIPAGG). At 25-511 (SVPHEESSLV…IRTHTLFTPL (487 aa)) the chain is on the extracellular side. 5 Ig-like C2-type domains span residues 27–102 (PHEE…VFVK), 111–194 (DSLI…LNVR), 201–294 (PVIT…LKAL), 303–396 (ATMN…VYVK), and 399–497 (PEIL…FNFA). Cystine bridges form between Cys-45/Cys-87, Cys-126/Cys-175, Cys-141/Cys-172, and Cys-222/Cys-276. N-linked (GlcNAc...) asparagine glycosylation is found at Asn-76, Asn-135, Asn-149, Asn-269, Asn-286, Asn-306, Asn-318, Asn-338, Asn-343, Asn-356, Asn-453, and Asn-469. The cysteines at positions 414 and 481 are disulfide-linked. Residues 512 to 532 (LIAFGVAAGLMCIIVMILVYI) form a helical membrane-spanning segment. The Cytoplasmic portion of the chain corresponds to 533-960 (YLQKPKYEVQ…TQPLLVREDV (428 aa)). Tyr-554 contacts Mg(2+). Tyr-554 and Tyr-556 each carry phosphotyrosine; by autocatalysis. The Protein kinase domain maps to 575 to 913 (LSFGKTLGAG…QIVQLIEQQL (339 aa)). Residues 582-589 (GAGAFGKV), Lys-609, and 657-663 (EYCCYGD) contribute to the ATP site. 2 positions are modified to phosphotyrosine; by autocatalysis: Tyr-689 and Tyr-706. Asp-777 serves as the catalytic Proton acceptor. Arg-781 provides a ligand contact to ATP. Positions 782 and 795 each coordinate Mg(2+). A phosphotyrosine; by autocatalysis mark is found at Tyr-808 and Tyr-921.

It belongs to the protein kinase superfamily. Tyr protein kinase family. CSF-1/PDGF receptor subfamily. Ubiquitinated. KIT is rapidly ubiquitinated after autophosphorylation induced by KITLG/SCF binding, leading to internalization and degradation. In terms of processing, autophosphorylated on tyrosine residues. KITLG/SCF binding promotes autophosphorylation. Phosphorylated tyrosine residues are important for interaction with specific binding partners. High in the brain and testes and also present in the bursa of Fabricus, heart, kidney, lung, spleen thymus and ovary.

Its subcellular location is the cell membrane. The enzyme catalyses L-tyrosyl-[protein] + ATP = O-phospho-L-tyrosyl-[protein] + ADP + H(+). Tyrosine-protein kinase that acts as a cell-surface receptor for the cytokine KITLG/SCF and plays an essential role in the regulation of cell survival and proliferation, hematopoiesis, stem cell maintenance, gametogenesis, mast cell development, migration and function, and in melanogenesis. In response to KITLG/SCF binding, KIT can activate several signaling pathways. Promotes phosphorylation of PIK3R1, the regulatory subunit of phosphatidylinositol 3-kinase, and subsequent activation of the kinase AKT1. Activated KIT also transmits signals via GRB2 and activation of RAS, RAF1 and the MAP kinases MAPK1/ERK2 and/or MAPK3/ERK1. Promotes activation of STAT family members STAT1, STAT3, STAT5A and STAT5B. KIT promotes activation of PLCG1, leading to the production of the cellular signaling molecules diacylglycerol and inositol 1,4,5-trisphosphate. KIT signaling is modulated by protein phosphatases, and by rapid internalization and degradation of the receptor. In Gallus gallus (Chicken), this protein is Mast/stem cell growth factor receptor Kit (KIT).